The primary structure comprises 103 residues: Large ribosomal subunit protein bL21 (103 aa).

The protein belongs to the bacterial ribosomal protein bL21 family. In terms of assembly, part of the 50S ribosomal subunit. Contacts protein L20.

In terms of biological role, this protein binds to 23S rRNA in the presence of protein L20. This chain is Large ribosomal subunit protein bL21, found in Paraburkholderia phymatum (strain DSM 17167 / CIP 108236 / LMG 21445 / STM815) (Burkholderia phymatum).